A 124-amino-acid polypeptide reads, in one-letter code: Holo-[acyl-carrier-protein] synthase (124 aa).

Residues Asp8 and Glu60 each coordinate Mg(2+).

Belongs to the P-Pant transferase superfamily. AcpS family. Mg(2+) is required as a cofactor.

It localises to the cytoplasm. The enzyme catalyses apo-[ACP] + CoA = holo-[ACP] + adenosine 3',5'-bisphosphate + H(+). In terms of biological role, transfers the 4'-phosphopantetheine moiety from coenzyme A to a Ser of acyl-carrier-protein. This chain is Holo-[acyl-carrier-protein] synthase, found in Wolbachia pipientis subsp. Culex pipiens (strain wPip).